The chain runs to 213 residues: Orotate phosphoribosyltransferase (213 aa).

Lysine 26 contacts 5-phospho-alpha-D-ribose 1-diphosphate. Residue 34–35 participates in orotate binding; it reads FF. 5-phospho-alpha-D-ribose 1-diphosphate-binding positions include 72 to 73, arginine 99, lysine 100, lysine 103, histidine 105, and 124 to 132; these read YK and DDVITAGTA. Orotate-binding residues include threonine 128 and arginine 156.

Belongs to the purine/pyrimidine phosphoribosyltransferase family. PyrE subfamily. Homodimer. Mg(2+) is required as a cofactor.

The enzyme catalyses orotidine 5'-phosphate + diphosphate = orotate + 5-phospho-alpha-D-ribose 1-diphosphate. It participates in pyrimidine metabolism; UMP biosynthesis via de novo pathway; UMP from orotate: step 1/2. Catalyzes the transfer of a ribosyl phosphate group from 5-phosphoribose 1-diphosphate to orotate, leading to the formation of orotidine monophosphate (OMP). The sequence is that of Orotate phosphoribosyltransferase from Aliivibrio fischeri (strain MJ11) (Vibrio fischeri).